We begin with the raw amino-acid sequence, 6269 residues long: Nonribosomal peptide synthetase 1 (6269 aa).

An adenylation 1 region spans residues 249-781 (ENDWSRVCSF…VSGKLDRKSI (533 aa)). The Carrier 1 domain occupies 803 to 879 (RAANSTEDQL…ELATRVKGVT (77 aa)). Position 840 is an O-(pantetheine 4'-phosphoryl)serine (Ser-840). An epimerase 1 region spans residues 894-1342 (LSPIQKLHFM…TLSDFPMLSL (449 aa)). A condensation 1 region spans residues 1373–1775 (SRMQQGILLS…FLQSLENIIH (403 aa)). Residues 1725–2333 (HDPAEFPVYV…TGLLDRWFLR (609 aa)) form an adenylation 2 region. The disordered stretch occupies residues 2364–2386 (KPSPSQLLPSSTSATHRSSGTST). Residues 2367–2376 (PSQLLPSSTS) show a composition bias toward low complexity. The segment covering 2377–2386 (ATHRSSGTST) has biased composition (polar residues). Residues 2597 to 2670 (WRKYLADVES…TGSEEVCYGY (74 aa)) are condensation 2. The tract at residues 2845–3368 (RCAHEIIEQQ…SGKLDRKKLR (524 aa)) is adenylation 3. Residues 3392-3468 (ASDEGVEGTL…NMAKRCGMLQ (77 aa)) enclose the Carrier 2 domain. Ser-3429 bears the O-(pantetheine 4'-phosphoryl)serine mark. The tract at residues 3512-3898 (CSPVQEGLLT…GQFSFVLEQL (387 aa)) is condensation 3. The adenylation 4 stretch occupies residues 3919–4454 (DSKEVALWNK…VSGKLDRKKI (536 aa)). The region spanning 4487-4563 (EDKSTAAKIL…ELIQAAEVET (77 aa)) is the Carrier 3 domain. Ser-4524 is modified (O-(pantetheine 4'-phosphoryl)serine). The tract at residues 4578-5024 (LSPIQNLYFK…DFPLLPITYD (447 aa)) is epimerase 2. A condensation 4 region spans residues 5052–5466 (SSVQEGILLS…PSQLVSELDL (415 aa)). Positions 5552-5628 (SKLMEPEKRL…DMLAAISASN (77 aa)) constitute a Carrier 4 domain. Position 5589 is an O-(pantetheine 4'-phosphoryl)serine (Ser-5589). The tract at residues 5628–5658 (NSSSALEPDSPADSNNEKPAEPPRLVELERN) is disordered. Over residues 5642 to 5657 (NNEKPAEPPRLVELER) the composition is skewed to basic and acidic residues. The segment at 5720–6067 (FFFDGRGSLD…SSSDGKLGVS (348 aa)) is condensation 5. One can recognise a Carrier 5 domain in the interval 6139-6220 (SDILVHSDVV…GQMAVLTLHN (82 aa)).

The protein belongs to the NRP synthetase family. Post-translationally, the thiolation domains are 4'-phosphopantetheinylated.

Its function is as follows. Nonribosomal peptide synthesis (NRPS) is a key mechanism responsible for the biosynthesis of bioactive metabolites which are potentially contributing to organismal virulence. Contributes to improved fungal tolerance against oxidative stress, during the infection process. The sequence is that of Nonribosomal peptide synthetase 1 (NRPS1) from Aspergillus fumigatus (strain ATCC MYA-4609 / CBS 101355 / FGSC A1100 / Af293) (Neosartorya fumigata).